The chain runs to 122 residues: Large ribosomal subunit protein eL22B (122 aa).

Belongs to the eukaryotic ribosomal protein eL22 family. As to quaternary structure, component of the large ribosomal subunit (LSU). Mature yeast ribosomes consist of a small (40S) and a large (60S) subunit. The 40S small subunit contains 1 molecule of ribosomal RNA (18S rRNA) and 33 different proteins (encoded by 57 genes). The large 60S subunit contains 3 rRNA molecules (25S, 5.8S and 5S rRNA) and 46 different proteins (encoded by 81 genes).

It localises to the cytoplasm. Component of the ribosome, a large ribonucleoprotein complex responsible for the synthesis of proteins in the cell. The small ribosomal subunit (SSU) binds messenger RNAs (mRNAs) and translates the encoded message by selecting cognate aminoacyl-transfer RNA (tRNA) molecules. The large subunit (LSU) contains the ribosomal catalytic site termed the peptidyl transferase center (PTC), which catalyzes the formation of peptide bonds, thereby polymerizing the amino acids delivered by tRNAs into a polypeptide chain. The nascent polypeptides leave the ribosome through a tunnel in the LSU and interact with protein factors that function in enzymatic processing, targeting, and the membrane insertion of nascent chains at the exit of the ribosomal tunnel. This chain is Large ribosomal subunit protein eL22B, found in Saccharomyces cerevisiae (strain ATCC 204508 / S288c) (Baker's yeast).